The sequence spans 127 residues: Glycine cleavage system H protein (127 aa).

The Lipoyl-binding domain occupies 24–106 (TATLGISAFA…YGEGWLVKVQ (83 aa)). The residue at position 65 (Lys-65) is an N6-lipoyllysine.

This sequence belongs to the GcvH family. As to quaternary structure, the glycine cleavage system is composed of four proteins: P, T, L and H. The cofactor is (R)-lipoate.

Functionally, the glycine cleavage system catalyzes the degradation of glycine. The H protein shuttles the methylamine group of glycine from the P protein to the T protein. This Thermosynechococcus vestitus (strain NIES-2133 / IAM M-273 / BP-1) protein is Glycine cleavage system H protein.